We begin with the raw amino-acid sequence, 297 residues long: tRNA (guanine-N(7)-)-methyltransferase (297 aa).

Residues E22, E47, D74, and D97 each contribute to the S-adenosyl-L-methionine site. D97 is an active-site residue. Substrate-binding positions include K101, D133, and 165–168 (TKYE).

Belongs to the class I-like SAM-binding methyltransferase superfamily. TrmB family.

The catalysed reaction is guanosine(46) in tRNA + S-adenosyl-L-methionine = N(7)-methylguanosine(46) in tRNA + S-adenosyl-L-homocysteine. It participates in tRNA modification; N(7)-methylguanine-tRNA biosynthesis. Its function is as follows. Catalyzes the formation of N(7)-methylguanine at position 46 (m7G46) in tRNA. The polypeptide is tRNA (guanine-N(7)-)-methyltransferase (Aquifex aeolicus (strain VF5)).